The sequence spans 86 residues: ATP synthase epsilon chain (86 aa).

This sequence belongs to the ATPase epsilon chain family. As to quaternary structure, F-type ATPases have 2 components, CF(1) - the catalytic core - and CF(0) - the membrane proton channel. CF(1) has five subunits: alpha(3), beta(3), gamma(1), delta(1), epsilon(1). CF(0) has three main subunits: a, b and c.

It localises to the cell inner membrane. Functionally, produces ATP from ADP in the presence of a proton gradient across the membrane. This is ATP synthase epsilon chain (atpC) from Caulobacter vibrioides (strain ATCC 19089 / CIP 103742 / CB 15) (Caulobacter crescentus).